A 102-amino-acid polypeptide reads, in one-letter code: Small ribosomal subunit protein uS10 (102 aa).

Belongs to the universal ribosomal protein uS10 family. Part of the 30S ribosomal subunit.

Involved in the binding of tRNA to the ribosomes. This chain is Small ribosomal subunit protein uS10, found in Mycoplasma capricolum subsp. capricolum (strain California kid / ATCC 27343 / NCTC 10154).